The sequence spans 270 residues: Undecaprenyl-diphosphatase (270 aa).

Transmembrane regions (helical) follow at residues 3 to 23 (TIVT…LPVS), 42 to 62 (WAMF…VQYW), 86 to 106 (LLAA…YIDV), 108 to 128 (LGSP…ILVI), 184 to 204 (AEFS…LELL), 217 to 237 (VGWS…LAVI), and 249 to 269 (FKPF…WLAM).

It belongs to the UppP family.

It is found in the cell inner membrane. The enzyme catalyses di-trans,octa-cis-undecaprenyl diphosphate + H2O = di-trans,octa-cis-undecaprenyl phosphate + phosphate + H(+). Functionally, catalyzes the dephosphorylation of undecaprenyl diphosphate (UPP). Confers resistance to bacitracin. This is Undecaprenyl-diphosphatase from Novosphingobium aromaticivorans (strain ATCC 700278 / DSM 12444 / CCUG 56034 / CIP 105152 / NBRC 16084 / F199).